Consider the following 66-residue polypeptide: Large ribosomal subunit protein uL29 (66 aa).

This sequence belongs to the universal ribosomal protein uL29 family.

The sequence is that of Large ribosomal subunit protein uL29 from Rhizobium etli (strain ATCC 51251 / DSM 11541 / JCM 21823 / NBRC 15573 / CFN 42).